Here is a 430-residue protein sequence, read N- to C-terminus: Trigger factor (430 aa).

Residues 163–248 form the PPIase FKBP-type domain; that stretch reads GNIAIIDFKG…IKDIKVKELP (86 aa).

This sequence belongs to the FKBP-type PPIase family. Tig subfamily.

It localises to the cytoplasm. The enzyme catalyses [protein]-peptidylproline (omega=180) = [protein]-peptidylproline (omega=0). In terms of biological role, involved in protein export. Acts as a chaperone by maintaining the newly synthesized protein in an open conformation. Functions as a peptidyl-prolyl cis-trans isomerase. This Clostridium botulinum (strain Okra / Type B1) protein is Trigger factor.